The primary structure comprises 161 residues: MKPLHTPKPAQIWVDADACPAVIRDILFRAAARTGTALTLVANHSLSTPTLPHVRAIQVPGGPDAADDAIAERVAAGDLVVTQDIPLAARVLEAGATAVGPRGEPFTSNTIKERLSVRGFMEELRGAGIATGGPSALHARDRQAFAAQLDRWLAAQPRPPL.

This sequence belongs to the UPF0178 family.

In Xanthomonas oryzae pv. oryzae (strain PXO99A), this protein is UPF0178 protein PXO_00400.